We begin with the raw amino-acid sequence, 612 residues long: MALPAFAARALGPPLQPEQGAPARTTCPRRHSRVEAELAASRPGSVAASVRAGPPRGVSLGFNSPPLQDKPPKAFSSLAGALRAPLFALLPRGRRRRMHDLRRRWDLGSLCRALLTRGLAAVGHSLKHVLSAIFSKIFGPLASVGNMDEKSNKLLLALVMLFLFAVIVLQYVCPGTECQLLRLQAFSSPVPDPYRSEDESSARFVPRYNFSRGDLLRKVDFDIKGDDLIVFLHIQKTGGTTFGRHLVRNIQLEQPCECRVGQKKCTCHRPGKRETWLFSRFSTGWSCGLHADWTELTSCVPAVVDGKRDARLRPSRNFHYITILRDPVSRYLSEWRHVQRGATWKASLHVCDGRPPTSEELPSCYTGDDWSGCPLKEFMDCPYNLANNRQVRMLSDLTLVGCYNLSVMPEKQRNKVLLESAKSNLKHMAFFGLTEFQRKTQYLFEKTFNMNFISPFTQYNTTRASSVEINEEIQKRIEGLNFLDMELYSYAKDLFLQRYQFMRQKEHQDARRKRQEQRKFLKGRFLQTHFQSQSQGQSQSQSPGQNLSQNPNPNPNQNLTQNLSHNLTPSSNPNSTQRENRGSQKQGSGQGQGDSGTSNGTNDYIGSVETWR.

Residues 1–4 (MALP) lie on the Cytoplasmic side of the membrane. The helical; Signal-anchor for type II membrane protein transmembrane segment at 5–27 (AFAARALGPPLQPEQGAPARTTC) threads the bilayer. The segment at 9–52 (RALGPPLQPEQGAPARTTCPRRHSRVEAELAASRPGSVAASVRA) is disordered. Residues 28–612 (PRRHSRVEAE…DYIGSVETWR (585 aa)) are Lumenal-facing. The N-linked (GlcNAc...) asparagine glycan is linked to Asn209. Residue 233–241 (HIQKTGGTT) coordinates 3'-phosphoadenylyl sulfate. Residues 263-264 (KK), Arg280, Trp285, and His290 contribute to the substrate site. Catalysis depends on His290, which acts as the Proton acceptor. 2 residues coordinate 3'-phosphoadenylyl sulfate: Arg325 and Ser333. Substrate-binding residues include His337 and Trp344. N-linked (GlcNAc...) asparagine glycosylation occurs at Asn404. 457 to 459 (TQY) contributes to the 3'-phosphoadenylyl sulfate binding site. N-linked (GlcNAc...) asparagine glycosylation is present at Asn460. 463-464 (RA) is a 3'-phosphoadenylyl sulfate binding site. The tract at residues 529–612 (HFQSQSQGQS…DYIGSVETWR (84 aa)) is disordered. The span at 531–564 (QSQSQGQSQSQSPGQNLSQNPNPNPNQNLTQNLS) shows a compositional bias: low complexity. N-linked (GlcNAc...) asparagine glycosylation is found at Asn546, Asn558, Asn562, Asn574, and Asn599. The span at 565-577 (HNLTPSSNPNSTQ) shows a compositional bias: polar residues.

The protein belongs to the sulfotransferase 6 family.

The protein localises to the membrane. The catalysed reaction is alpha-D-glucosaminyl-[heparan sulfate](n) + 3'-phosphoadenylyl sulfate = 6-sulfo-alpha-D-glucosaminyl-[heparan sulfate](n) + adenosine 3',5'-bisphosphate + H(+). Functionally, 6-O-sulfation enzyme which catalyzes the transfer of sulfate from 3'-phosphoadenosine 5'-phosphosulfate (PAPS) to position 6 of the N-sulfoglucosamine residue (GlcNS) of heparan sulfate. The sequence is that of Heparan-sulfate 6-O-sulfotransferase 2 (Hs6st2) from Mus musculus (Mouse).